The following is a 157-amino-acid chain: UPF0303 protein NT01EI_1570 (157 aa).

Belongs to the UPF0303 family.

This chain is UPF0303 protein NT01EI_1570, found in Edwardsiella ictaluri (strain 93-146).